Reading from the N-terminus, the 188-residue chain is MSKKSNKNLAFSLLGLIISMVLLSFASVPIYNLFCKVTGYGGTTAKETVSVYSKVKGTKPIIIEFDANVDKDLPWRFIPRQQRVQIVPGQNTLVFYETENLSDNDIIGTSVYNVTPNKAGKYFVKIHCFCFEEQLLKAGERVLMPVTFYIDKDFELDPEMQDIKVLTLSYSFFKVREMSSLRGNYVSN.

Residues 1–8 lie on the Cytoplasmic side of the membrane; that stretch reads MSKKSNKN. The chain crosses the membrane as a helical; Signal-anchor for type II membrane protein span at residues 9 to 31; it reads LAFSLLGLIISMVLLSFASVPIY. Over 32–188 the chain is Periplasmic; the sequence is NLFCKVTGYG…SSLRGNYVSN (157 aa).

The protein belongs to the COX11/CtaG family.

Its subcellular location is the cell inner membrane. Functionally, exerts its effect at some terminal stage of cytochrome c oxidase synthesis, probably by being involved in the insertion of the copper B into subunit I. This Rickettsia conorii (strain ATCC VR-613 / Malish 7) protein is Cytochrome c oxidase assembly protein CtaG.